A 695-amino-acid chain; its full sequence is MRVLGLFERGNNLNFADTYVYTWNKQYSFHENAFLISNQVATTIIIYLDKEIVNQVNEAFNLLNSNGIPALIIKSDHIGIFTSSNFTYDWQNKIIYFHEYTYYKNNEFIVSDEFWLNTSIQDLLPYKVLFFERGLRKLYEGEEYILYNTATDDDIIYKYIYEKDVIMSGNDYSKLYDTKSFKNFVHFMRLLRMRFAVPFDQLSNRVTRSRAFAKSKIHIGLRNESIPQALDNIHHYWINYSANGMRVSELKGSGSYSEKKISEFDIGQFKNYMNFLTLMFYIKNMKKKPSCTIIGAAPGYWIPSMKKYFNIVTYDDKHVDSTEHYNRYFTDDDIASVKTNGVYIDVRSDFKNYDWKKRRQLVEEETMRWLSITYKLLENRYVEAVLLKMTAMDIEIPDGYFVHFPTTYRKSEYYLLVDKQTVKRPKIKITKSLAYGAINTIFSDNVFISGKYSLKGKTEGVLALYCLSNTINPKEKVVQYANSFSGTCMTVRLNNTYILNKIIDFKTNADYTFLPSDFQCSIKTVLTSYRGYAGVFGYAITKDLKSDGNNHIYIIPNARDDDNFDTFASHLGLSRYSHSKRFSESATTMSGYLFRDMVSGKENMEDTDTENLASGHVFNAIAHYRFDYTYDIVGWLKLHKMRKFRVKSNIYGEHTDDEIRNAIEAAYVYYLLDGDEVGKEYAKRIMEIWDVQTWG.

An N7-methyltransferase activity region spans residues 187 to 255 (FMRLLRMRFA…RVSELKGSGS (69 aa)). The interval 256-432 (YSEKKISEFD…KRPKIKITKS (177 aa)) is 2'-O-methyltransferase activity. An N7-methyltransferase activity region spans residues 433–559 (LAYGAINTIF…NHIYIIPNAR (127 aa)). A GTase/RTPase activity region spans residues 560-695 (DDDNFDTFAS…MEIWDVQTWG (136 aa)).

Belongs to the rotavirus VP3 family. Interacts with VP1. Interacts with VP2.

The protein localises to the virion. It catalyses the reaction a 5'-end diphospho-ribonucleoside in mRNA + GTP + H(+) = a 5'-end (5'-triphosphoguanosine)-ribonucleoside in mRNA + diphosphate. It carries out the reaction a 5'-end (5'-triphosphoguanosine)-ribonucleoside in mRNA + S-adenosyl-L-methionine = a 5'-end (N(7)-methyl 5'-triphosphoguanosine)-ribonucleoside in mRNA + S-adenosyl-L-homocysteine. Functionally, multifunctional enzyme involved in mRNA capping. Catalyzes the formation of the 5' cap structure on the viral plus-strand transcripts. Specifically binds to GTP and displays guanylyltransferase and methyltransferase activities. Has affinity for ssRNA but not for dsRNA. Capping activity is non-specific and caps RNAs that initiate with either a G or an A residue. Together with VP1 polymerase, forms a VP1-VP3 complex positioned near the channels situated at each of the five-fold vertices of the core. Following infection, the outermost layer of the virus is lost, leaving a double-layered particle (DLP) made up of the core and VP6 shell. VP1 then catalyzes the transcription of fully conservative plus-strand genomic RNAs that are capped by VP3 and extruded through the DLP's channels into the cytoplasm where they function as mRNAs for translation of viral proteins. DLPs probably have an RNA triphosphatase activity as well, whereas open cores do not. This chain is Protein VP3, found in Rotavirus C (isolate RVC/Cow/Japan/Shintoku/1991/G2P[3]) (RV-C).